The sequence spans 239 residues: MSTALSVFVTGTDTEIGKTFVSAAMLHGFARHGLRAAALKPVAAGAYERDGIWRNEDADQLDAAANVALPPELRTPFLLKAPAAPHIVAAHEGVTLDIDTIVASHREALTRANVVVVEGVGGFRVPLNDTQDTADLAVALGLPVVLVVGIRLGCISHALLTADAIRQRGLTLAGWVANHVDPAMSYADENVATIRDWLAREHRAPLLGRVAHLRPAAPESAAAMLDIAALVDTLRRAQH.

An ATP-binding site is contributed by E15–F20. T19 lines the Mg(2+) pocket. K40 is a catalytic residue. ATP-binding positions include D57, E118 to G121, N178 to H179, and A211 to L213. Mg(2+)-binding residues include D57 and E118.

The protein belongs to the dethiobiotin synthetase family. In terms of assembly, homodimer. Mg(2+) serves as cofactor.

It localises to the cytoplasm. It carries out the reaction (7R,8S)-7,8-diammoniononanoate + CO2 + ATP = (4R,5S)-dethiobiotin + ADP + phosphate + 3 H(+). Its pathway is cofactor biosynthesis; biotin biosynthesis; biotin from 7,8-diaminononanoate: step 1/2. Catalyzes a mechanistically unusual reaction, the ATP-dependent insertion of CO2 between the N7 and N8 nitrogen atoms of 7,8-diaminopelargonic acid (DAPA, also called 7,8-diammoniononanoate) to form a ureido ring. The chain is ATP-dependent dethiobiotin synthetase BioD from Burkholderia vietnamiensis (strain G4 / LMG 22486) (Burkholderia cepacia (strain R1808)).